The primary structure comprises 38 residues: Photosystem II reaction center protein Y (38 aa).

At 1–4 (MSMR) the chain is on the lumenal side. Residues 5-23 (LVVVLLPLGIALGWAVYNI) traverse the membrane as a helical segment. Over 24-38 (GKLAIEQWRRTGSKV) the chain is Stromal.

This sequence belongs to the PsbY family. PSII is composed of 1 copy each of membrane proteins PsbA, PsbB, PsbC, PsbD, PsbE, PsbF, PsbH, PsbI, PsbJ, PsbK, PsbL, PsbM, PsbT, PsbX, PsbY, PsbZ, Psb30/Ycf12, at least 3 peripheral proteins of the oxygen-evolving complex and a large number of cofactors. It forms dimeric complexes.

Its subcellular location is the plastid. It localises to the cyanelle thylakoid membrane. Functionally, loosely associated component of the core of photosystem II (PSII), it is not always seen in crystals. PSII is a light-driven water plastoquinone oxidoreductase, using light energy to abstract electrons from H(2)O, generating a proton gradient subsequently used for ATP formation. The chain is Photosystem II reaction center protein Y from Cyanophora paradoxa.